Consider the following 242-residue polypeptide: UPF0309 protein BAbS19_II03080 (242 aa).

In terms of domain architecture, SIS spans alanine 30–proline 214.

Belongs to the UPF0309 family.

The chain is UPF0309 protein BAbS19_II03080 from Brucella abortus (strain S19).